The following is a 340-amino-acid chain: Branched-chain-amino-acid aminotransferase (340 aa).

K187 bears the N6-(pyridoxal phosphate)lysine mark.

This sequence belongs to the class-IV pyridoxal-phosphate-dependent aminotransferase family. Pyridoxal 5'-phosphate is required as a cofactor.

The catalysed reaction is L-leucine + 2-oxoglutarate = 4-methyl-2-oxopentanoate + L-glutamate. The enzyme catalyses L-isoleucine + 2-oxoglutarate = (S)-3-methyl-2-oxopentanoate + L-glutamate. It carries out the reaction L-valine + 2-oxoglutarate = 3-methyl-2-oxobutanoate + L-glutamate. It functions in the pathway amino-acid biosynthesis; L-isoleucine biosynthesis; L-isoleucine from 2-oxobutanoate: step 4/4. The protein operates within amino-acid biosynthesis; L-leucine biosynthesis; L-leucine from 3-methyl-2-oxobutanoate: step 4/4. It participates in amino-acid biosynthesis; L-valine biosynthesis; L-valine from pyruvate: step 4/4. Acts on leucine, isoleucine and valine. This Helicobacter pylori (strain J99 / ATCC 700824) (Campylobacter pylori J99) protein is Branched-chain-amino-acid aminotransferase (ilvE).